We begin with the raw amino-acid sequence, 618 residues long: Arginine--tRNA ligase (618 aa).

The 'HIGH' region motif lies at 113–123; the sequence is ANPIHPLHIGH.

The protein belongs to the class-I aminoacyl-tRNA synthetase family.

The protein resides in the cytoplasm. The catalysed reaction is tRNA(Arg) + L-arginine + ATP = L-arginyl-tRNA(Arg) + AMP + diphosphate. The sequence is that of Arginine--tRNA ligase from Sulfolobus acidocaldarius (strain ATCC 33909 / DSM 639 / JCM 8929 / NBRC 15157 / NCIMB 11770).